Consider the following 426-residue polypeptide: Serine--tRNA ligase (426 aa).

An L-serine-binding site is contributed by 235-237 (TAE). 266-268 (RRE) provides a ligand contact to ATP. An L-serine-binding site is contributed by Glu-289. An ATP-binding site is contributed by 353–356 (EISS). Ser-389 provides a ligand contact to L-serine.

It belongs to the class-II aminoacyl-tRNA synthetase family. Type-1 seryl-tRNA synthetase subfamily. In terms of assembly, homodimer. The tRNA molecule binds across the dimer.

It is found in the cytoplasm. The enzyme catalyses tRNA(Ser) + L-serine + ATP = L-seryl-tRNA(Ser) + AMP + diphosphate + H(+). It catalyses the reaction tRNA(Sec) + L-serine + ATP = L-seryl-tRNA(Sec) + AMP + diphosphate + H(+). It functions in the pathway aminoacyl-tRNA biosynthesis; selenocysteinyl-tRNA(Sec) biosynthesis; L-seryl-tRNA(Sec) from L-serine and tRNA(Sec): step 1/1. Catalyzes the attachment of serine to tRNA(Ser). Is also able to aminoacylate tRNA(Sec) with serine, to form the misacylated tRNA L-seryl-tRNA(Sec), which will be further converted into selenocysteinyl-tRNA(Sec). The chain is Serine--tRNA ligase from Trichormus variabilis (strain ATCC 29413 / PCC 7937) (Anabaena variabilis).